A 463-amino-acid chain; its full sequence is Sodium-coupled neutral amino acid transporter 7 (463 aa).

Position 28 is a phosphoserine (S28). Transmembrane regions (helical) follow at residues 56 to 76 (AVFI…PAAF), 82 to 102 (VAAG…GLVI), 130 to 150 (LCEV…LIII), 179 to 199 (FTIS…KEIG), 206 to 226 (FLSV…YIWP), 240 to 260 (ASWM…QCHV), 283 to 303 (AAMV…FLTF), 320 to 340 (VAVA…YPIL), 372 to 392 (VLQT…IPDI), 396 to 416 (ISVI…LCLI), and 429 to 449 (ASWW…AFIF).

This sequence belongs to the amino acid/polyamine transporter 2 family. As to quaternary structure, interacts with the mTORC1 complex; this interaction mediates the recruitment of mTORC1 to the lysosome and its subsequent activation. In terms of tissue distribution, highly expressed in the brain, including the hippocampus, especially in the granular layer of dentate gyrus cells and the pyramidal cell layer of the hippocampus, amygdala, thalamus, hypothalamus, in the layer of Purkinje cells in the cerebellum and the layers of cortex. Particularly strong expression in neurons of the ventromedial hypothalamus, basolateral amygdala, ventral tegmental area, and locus coeruleus. Not detected in glial cells, including astrocytes. In addition to brain, also expressed in the spinal cord (at protein level).

It localises to the lysosome membrane. Its subcellular location is the cell projection. The protein localises to the axon. It carries out the reaction L-glutamine(in) + Na(+)(in) = L-glutamine(out) + Na(+)(out). It catalyses the reaction L-asparagine(in) + Na(+)(in) = L-asparagine(out) + Na(+)(out). In terms of biological role, symporter that selectively cotransports sodium ions and amino acids, such as L-glutamine and L-asparagine from the lysosome into the cytoplasm and may participates in mTORC1 activation. The transport activity requires an acidic lysosomal lumen. The polypeptide is Sodium-coupled neutral amino acid transporter 7 (Mus musculus (Mouse)).